Reading from the N-terminus, the 468-residue chain is 55 kDa erythrocyte membrane protein (468 aa).

The PDZ domain occupies 73–154 (LVQFEKVTEE…MVSIKVIPNQ (82 aa)). Residues 160–230 (ALQMFMRAQF…PSPELQEWRV (71 aa)) form the SH3 domain. A Guanylate kinase-like domain is found at 284 to 453 (RKTLVLIGAS…SLKLLEEAFE (170 aa)).

The protein belongs to the MAGUK family.

It localises to the membrane. Its subcellular location is the cell projection. The protein resides in the stereocilium. Its function is as follows. May play a role in the regulation of neutrophil polarization. The polypeptide is 55 kDa erythrocyte membrane protein (MPP1) (Gallus gallus (Chicken)).